A 296-amino-acid polypeptide reads, in one-letter code: Nucleotide-binding protein SPJ_1472 (296 aa).

13–20 (GMSGAGKT) is an ATP binding site. 63–66 (DMRS) lines the GTP pocket.

It belongs to the RapZ-like family.

Functionally, displays ATPase and GTPase activities. This chain is Nucleotide-binding protein SPJ_1472, found in Streptococcus pneumoniae (strain JJA).